The sequence spans 307 residues: Pyridoxal 5'-phosphate synthase subunit PdxS (307 aa).

Positions 1–10 are enriched in basic residues; it reads MRGQPRPKLR. The tract at residues 1–20 is disordered; sequence MRGQPRPKLRRMTEQQTGTP. Residue Asp37 participates in D-ribose 5-phosphate binding. Catalysis depends on Lys94, which acts as the Schiff-base intermediate with D-ribose 5-phosphate. Gly166 serves as a coordination point for D-ribose 5-phosphate. A D-glyceraldehyde 3-phosphate-binding site is contributed by Arg178. D-ribose 5-phosphate contacts are provided by residues Gly227 and 248–249; that span reads GS.

It belongs to the PdxS/SNZ family. In the presence of PdxT, forms a dodecamer of heterodimers.

It carries out the reaction aldehydo-D-ribose 5-phosphate + D-glyceraldehyde 3-phosphate + L-glutamine = pyridoxal 5'-phosphate + L-glutamate + phosphate + 3 H2O + H(+). It participates in cofactor biosynthesis; pyridoxal 5'-phosphate biosynthesis. Functionally, catalyzes the formation of pyridoxal 5'-phosphate from ribose 5-phosphate (RBP), glyceraldehyde 3-phosphate (G3P) and ammonia. The ammonia is provided by the PdxT subunit. Can also use ribulose 5-phosphate and dihydroxyacetone phosphate as substrates, resulting from enzyme-catalyzed isomerization of RBP and G3P, respectively. This is Pyridoxal 5'-phosphate synthase subunit PdxS from Deinococcus radiodurans (strain ATCC 13939 / DSM 20539 / JCM 16871 / CCUG 27074 / LMG 4051 / NBRC 15346 / NCIMB 9279 / VKM B-1422 / R1).